Consider the following 284-residue polypeptide: Tropomyosin (284 aa).

A disordered region spans residues 1 to 47 (MDAIKKKMQAMKIEKDNAMDRADAAEEKARQQQERVEKLEEELRDTQ). Positions 1–284 (MDAIKKKMQA…DQTFQELSGY (284 aa)) form a coiled coil. The segment covering 12-38 (KIEKDNAMDRADAAEEKARQQQERVEK) has biased composition (basic and acidic residues).

The protein belongs to the tropomyosin family. Homodimer.

Functionally, tropomyosin, in association with the troponin complex, plays a central role in the calcium dependent regulation of muscle contraction. The polypeptide is Tropomyosin (Trichinella pseudospiralis (Parasitic roundworm)).